We begin with the raw amino-acid sequence, 86 residues long: Small ribosomal subunit protein bS20 (86 aa).

The tract at residues 1 to 25 (MANIKSQMKRIKTNEANRQRNKAVK) is disordered.

The protein belongs to the bacterial ribosomal protein bS20 family.

Its function is as follows. Binds directly to 16S ribosomal RNA. This is Small ribosomal subunit protein bS20 from Saccharopolyspora erythraea (strain ATCC 11635 / DSM 40517 / JCM 4748 / NBRC 13426 / NCIMB 8594 / NRRL 2338).